The chain runs to 103 residues: RNA-binding protein Hfq (103 aa).

The Sm domain occupies 9 to 68 (DPFLNALRRERVPVSIYLVNGIKLQGQIESFDQFVILLKNTVSQMVYKHAISTVVPSRPV). Positions 63–103 (VPSRPVSHHSNNAGGGTGSNFHHGSNAQGSSAPAQDSDETE) are disordered. The segment covering 81–96 (SNFHHGSNAQGSSAPA) has biased composition (polar residues).

The protein belongs to the Hfq family. In terms of assembly, homohexamer.

In terms of biological role, RNA chaperone that binds small regulatory RNA (sRNAs) and mRNAs to facilitate mRNA translational regulation in response to envelope stress, environmental stress and changes in metabolite concentrations. Also binds with high specificity to tRNAs. The sequence is that of RNA-binding protein Hfq from Enterobacter sp. (strain 638).